A 126-amino-acid chain; its full sequence is Aspartate 1-decarboxylase (126 aa).

Ser-25 functions as the Schiff-base intermediate with substrate; via pyruvic acid in the catalytic mechanism. Ser-25 carries the pyruvic acid (Ser) modification. Thr-57 is a substrate binding site. Residue Tyr-58 is the Proton donor of the active site. Residue 73-75 participates in substrate binding; sequence GAA.

It belongs to the PanD family. As to quaternary structure, heterooctamer of four alpha and four beta subunits. The cofactor is pyruvate. In terms of processing, is synthesized initially as an inactive proenzyme, which is activated by self-cleavage at a specific serine bond to produce a beta-subunit with a hydroxyl group at its C-terminus and an alpha-subunit with a pyruvoyl group at its N-terminus.

The protein localises to the cytoplasm. The enzyme catalyses L-aspartate + H(+) = beta-alanine + CO2. It functions in the pathway cofactor biosynthesis; (R)-pantothenate biosynthesis; beta-alanine from L-aspartate: step 1/1. Functionally, catalyzes the pyruvoyl-dependent decarboxylation of aspartate to produce beta-alanine. This chain is Aspartate 1-decarboxylase, found in Cronobacter sakazakii (strain ATCC BAA-894) (Enterobacter sakazakii).